Consider the following 250-residue polypeptide: Corrinoid adenosyltransferase MMAB (250 aa).

A mitochondrion-targeting transit peptide spans 1–32 (MAVCGLGSRLGLGSRLGLRGCFGAARLLYPRF). Residues 34–59 (SRGPQGVEDGDRPQPSSKTPRIPKIY) form a disordered region. ATP is bound by residues 60-63 (TKTG), 68-69 (SS), and Lys78. Ser134 is subject to Phosphoserine. Residue 190–194 (RRAER) coordinates ATP. The residue at position 211 (Lys211) is an N6-succinyllysine. An ATP-binding site is contributed by Asn214. Residue Lys230 is modified to N6-acetyllysine; alternate. N6-succinyllysine; alternate is present on Lys230.

This sequence belongs to the Cob(I)alamin adenosyltransferase family. In terms of assembly, homotrimer. Expressed in liver and skeletal muscle.

It is found in the mitochondrion. It catalyses the reaction cob(I)alamin-[corrinoid adenosyltransferase] + ATP = apo-[corrinoid adenosyltransferase] + adenosylcob(III)alamin + triphosphate. Functionally, converts cob(I)alamin to adenosylcobalamin (adenosylcob(III)alamin), a coenzyme for methylmalonyl-CoA mutase, therefore participates in the final step of the vitamin B12 conversion. Generates adenosylcobalamin (AdoCbl) and directly delivers the cofactor to MUT in a transfer that is stimulated by ATP-binding to MMAB and gated by MMAA. In Homo sapiens (Human), this protein is Corrinoid adenosyltransferase MMAB.